Consider the following 266-residue polypeptide: Apolipoprotein A-I (266 aa).

An N-terminal signal peptide occupies residues 1–18 (MKAALLTLAVLFLTGSQA). 2 consecutive repeat copies span residues 67–88 (LKLLDNWDSLSSTVTKLREQIG) and 89–110 (PVTQEFWDNLEKETEVLRQEMS). The tract at residues 67–266 (LKLLDNWDSL…DEATKKLNAQ (200 aa)) is 10 X approximate tandem repeats. Position 109 is a methionine sulfoxide (M109). One copy of the 3; half-length repeat lies at 111 to 121 (KDLEEVKQKVQ). 5 consecutive repeat copies span residues 122 to 143 (PYLDDFQKKWQEEVELYRQKVA), 144 to 165 (PLGSELREGARQKLQELQEKLS), 166 to 187 (PLAEELRDRARTHVDALRAQLA), 188 to 209 (PYSDDLRERLAARLEALKEGGG), and 210 to 231 (ASLAEYHARASEQLSALGEKAR). A 9; half-length repeat occupies 232-242 (PALEDLRQGLL). Copy 10 of the repeat occupies 243–266 (PVLESFKVSLLAAIDEATKKLNAQ).

It belongs to the apolipoprotein A1/A4/E family. Homodimer. Interacts with APOA1BP and CLU. Component of a sperm activating protein complex (SPAP), consisting of APOA1, an immunoglobulin heavy chain, an immunoglobulin light chain and albumin. Interacts with NDRG1. Interacts with SCGB3A2. Interacts with NAXE and YJEFN3. In terms of processing, palmitoylated. Glycosylated. Post-translationally, phosphorylation sites are present in the extracellular medium. In terms of tissue distribution, major protein of plasma HDL, also found in chylomicrons. Synthesized in the liver and small intestine.

Its subcellular location is the secreted. Participates in the reverse transport of cholesterol from tissues to the liver for excretion by promoting cholesterol efflux from tissues and by acting as a cofactor for the lecithin cholesterol acyltransferase (LCAT). As part of the SPAP complex, activates spermatozoa motility. In Canis lupus familiaris (Dog), this protein is Apolipoprotein A-I (APOA1).